The primary structure comprises 119 residues: Developmental pluripotency-associated protein 5B/5C (119 aa).

The KH; atypical domain occupies P24–L86.

It belongs to the KHDC1 family.

Its subcellular location is the cytoplasm. Involved in the maintenance of embryonic stem (ES) cell pluripotency. Dispensable for self-renewal of pluripotent ES cells and establishment of germ cells. Associates with specific target mRNAs. This is Developmental pluripotency-associated protein 5B/5C from Mus musculus (Mouse).